Here is a 432-residue protein sequence, read N- to C-terminus: D-amino acid dehydrogenase 1 (432 aa).

Residue 3-17 (VLVLGSGVIGTASAY) participates in FAD binding. Positions 410–432 (GLDISRYSNSPENAKNAHPAPAH) are disordered.

The protein belongs to the DadA oxidoreductase family. It depends on FAD as a cofactor.

The catalysed reaction is a D-alpha-amino acid + A + H2O = a 2-oxocarboxylate + AH2 + NH4(+). It functions in the pathway amino-acid degradation; D-alanine degradation; NH(3) and pyruvate from D-alanine: step 1/1. Functionally, catalyzes the oxidative deamination of D-amino acids. Has very broad substrate specificity; all the D-amino acids tested can be used as the substrate except D-Glu and D-Gln. Participates in the utilization of several D-amino acids as the sole source of nitrogen, i.e. D-alanine, D-histidine, D-phenylalanine, D-serine, D-threonine, and D-valine. In Pseudomonas aeruginosa (strain ATCC 15692 / DSM 22644 / CIP 104116 / JCM 14847 / LMG 12228 / 1C / PRS 101 / PAO1), this protein is D-amino acid dehydrogenase 1 (dadA1).